The following is a 1022-amino-acid chain: rDNA transcriptional regulator POL5 (1022 aa).

Acidic residues-rich tracts occupy residues 706-719, 728-748, and 781-802; these read EEFEEIKEENDASE, SESESESDSDDADEKDEEDEA, and DLDQLEGLSDDGGDDEDEESMD. Disordered regions lie at residues 706 to 748 and 778 to 805; these read EEFE…EDEA and GEVDLDQLEGLSDDGGDDEDEESMDDEK. Serine 789 is modified (phosphoserine).

This sequence belongs to the MYBBP1A family. In terms of assembly, interacts with FRK1.

The protein resides in the nucleus. It localises to the nucleolus. It catalyses the reaction DNA(n) + a 2'-deoxyribonucleoside 5'-triphosphate = DNA(n+1) + diphosphate. Stimulated by PCNA and inhibited by aphidicolin. Functionally, plays an important role in the regulation of rRNA transcription. Binds near or at the enhancer region of rRNA repeating units. May have DNA polymerase activity, but it is not required for in vivo function. This is rDNA transcriptional regulator POL5 from Saccharomyces cerevisiae (strain ATCC 204508 / S288c) (Baker's yeast).